An 88-amino-acid polypeptide reads, in one-letter code: MAEAQKTVRTLTGRVVSDKMDKTVTVLIERRVKHPIYGKYVKRSTKLHAHDESNQCRIGDLVTIRETRPLAKTKAWTLVDIVERAVEV.

Belongs to the universal ribosomal protein uS17 family. In terms of assembly, part of the 30S ribosomal subunit.

Functionally, one of the primary rRNA binding proteins, it binds specifically to the 5'-end of 16S ribosomal RNA. The chain is Small ribosomal subunit protein uS17 from Pseudomonas aeruginosa (strain LESB58).